A 418-amino-acid chain; its full sequence is rRNA methyltransferase 3, mitochondrial (418 aa).

Residues 1-40 (MAAPAKGMWCSLGSLLRVVQTRDLNARRWVRALRRSPVRV) constitute a mitochondrion transit peptide. Residues 41-90 (LSPSGQVEERKRAPDQQPRKAVPKASSQGQRQKQPLETSPSQTPHTWEEA) form a disordered region. The span at 47-58 (VEERKRAPDQQP) shows a compositional bias: basic and acidic residues. Positions 65-85 (ASSQGQRQKQPLETSPSQTPH) are enriched in polar residues. Gly-354, Ile-378, and Leu-387 together coordinate S-adenosyl-L-methionine.

Belongs to the class IV-like SAM-binding methyltransferase superfamily. RNA methyltransferase TrmH family.

It localises to the mitochondrion. It catalyses the reaction guanosine(1370) in 16S rRNA + S-adenosyl-L-methionine = 2'-O-methylguanosine(1370) in 16S rRNA + S-adenosyl-L-homocysteine + H(+). Its function is as follows. S-adenosyl-L-methionine-dependent 2'-O-ribose methyltransferase that catalyzes the formation of 2'-O-methylguanosine at position 1370 (Gm1370) in the 16S mitochondrial large subunit ribosomal RNA (mtLSU rRNA), a conserved modification in the peptidyl transferase domain of the mtLSU rRNA. Also required for formation of 2'-O-methyluridine at position 1369 (Um1369) mediated by MRM2. The sequence is that of rRNA methyltransferase 3, mitochondrial from Mus musculus (Mouse).